Reading from the N-terminus, the 460-residue chain is UDP-N-acetylmuramoylalanine--D-glutamate ligase (460 aa).

Gly115 to Thr121 is a binding site for ATP.

This sequence belongs to the MurCDEF family.

The protein resides in the cytoplasm. It carries out the reaction UDP-N-acetyl-alpha-D-muramoyl-L-alanine + D-glutamate + ATP = UDP-N-acetyl-alpha-D-muramoyl-L-alanyl-D-glutamate + ADP + phosphate + H(+). The protein operates within cell wall biogenesis; peptidoglycan biosynthesis. Its function is as follows. Cell wall formation. Catalyzes the addition of glutamate to the nucleotide precursor UDP-N-acetylmuramoyl-L-alanine (UMA). The sequence is that of UDP-N-acetylmuramoylalanine--D-glutamate ligase from Salinibacter ruber (strain DSM 13855 / M31).